A 130-amino-acid polypeptide reads, in one-letter code: Small ribosomal subunit protein uS8 (130 aa).

Belongs to the universal ribosomal protein uS8 family. As to quaternary structure, part of the 30S ribosomal subunit. Contacts proteins S5 and S12.

One of the primary rRNA binding proteins, it binds directly to 16S rRNA central domain where it helps coordinate assembly of the platform of the 30S subunit. The protein is Small ribosomal subunit protein uS8 of Actinobacillus succinogenes (strain ATCC 55618 / DSM 22257 / CCUG 43843 / 130Z).